Reading from the N-terminus, the 155-residue chain is SsrA-binding protein (155 aa).

It belongs to the SmpB family.

The protein resides in the cytoplasm. In terms of biological role, required for rescue of stalled ribosomes mediated by trans-translation. Binds to transfer-messenger RNA (tmRNA), required for stable association of tmRNA with ribosomes. tmRNA and SmpB together mimic tRNA shape, replacing the anticodon stem-loop with SmpB. tmRNA is encoded by the ssrA gene; the 2 termini fold to resemble tRNA(Ala) and it encodes a 'tag peptide', a short internal open reading frame. During trans-translation Ala-aminoacylated tmRNA acts like a tRNA, entering the A-site of stalled ribosomes, displacing the stalled mRNA. The ribosome then switches to translate the ORF on the tmRNA; the nascent peptide is terminated with the 'tag peptide' encoded by the tmRNA and targeted for degradation. The ribosome is freed to recommence translation, which seems to be the essential function of trans-translation. This is SsrA-binding protein from Geobacillus kaustophilus (strain HTA426).